We begin with the raw amino-acid sequence, 577 residues long: Proline--tRNA ligase (577 aa).

This sequence belongs to the class-II aminoacyl-tRNA synthetase family. ProS type 1 subfamily. As to quaternary structure, homodimer.

It is found in the cytoplasm. The catalysed reaction is tRNA(Pro) + L-proline + ATP = L-prolyl-tRNA(Pro) + AMP + diphosphate. In terms of biological role, catalyzes the attachment of proline to tRNA(Pro) in a two-step reaction: proline is first activated by ATP to form Pro-AMP and then transferred to the acceptor end of tRNA(Pro). As ProRS can inadvertently accommodate and process non-cognate amino acids such as alanine and cysteine, to avoid such errors it has two additional distinct editing activities against alanine. One activity is designated as 'pretransfer' editing and involves the tRNA(Pro)-independent hydrolysis of activated Ala-AMP. The other activity is designated 'posttransfer' editing and involves deacylation of mischarged Ala-tRNA(Pro). The misacylated Cys-tRNA(Pro) is not edited by ProRS. This chain is Proline--tRNA ligase, found in Helicobacter pylori (strain HPAG1).